The sequence spans 344 residues: Lipase chaperone (344 aa).

Residues A14–A34 traverse the membrane as a helical segment.

Belongs to the lipase chaperone family.

It localises to the cell inner membrane. Its function is as follows. May be involved in the folding of the extracellular lipase during its passage through the periplasm. In Burkholderia cenocepacia (strain HI2424), this protein is Lipase chaperone.